Here is a 563-residue protein sequence, read N- to C-terminus: Benzaldehyde lyase (563 aa).

The protein belongs to the TPP enzyme family. Requires a metal cation as cofactor. It depends on thiamine diphosphate as a cofactor.

The enzyme catalyses benzoin = 2 benzaldehyde. Cleavage of benzoin-anisoin acyloin linkage. This is Benzaldehyde lyase (bznB) from Pseudomonas fluorescens.